The following is a 62-amino-acid chain: Photosystem II reaction center protein Z (62 aa).

2 helical membrane passes run 8–28 (LIAA…VVFS) and 41–61 (WGGA…SIVV).

This sequence belongs to the PsbZ family. In terms of assembly, PSII is composed of 1 copy each of membrane proteins PsbA, PsbB, PsbC, PsbD, PsbE, PsbF, PsbH, PsbI, PsbJ, PsbK, PsbL, PsbM, PsbT, PsbX, PsbY, PsbZ, Psb30/Ycf12, peripheral proteins PsbO, CyanoQ (PsbQ), PsbU, PsbV and a large number of cofactors. It forms dimeric complexes.

Its subcellular location is the cellular thylakoid membrane. May control the interaction of photosystem II (PSII) cores with the light-harvesting antenna, regulates electron flow through the 2 photosystem reaction centers. PSII is a light-driven water plastoquinone oxidoreductase, using light energy to abstract electrons from H(2)O, generating a proton gradient subsequently used for ATP formation. The polypeptide is Photosystem II reaction center protein Z (Acaryochloris marina (strain MBIC 11017)).